The sequence spans 321 residues: Pirin-like protein 2 (321 aa).

4 residues coordinate Fe cation: His88, His90, His132, and Glu134.

Belongs to the pirin family. In terms of assembly, interacts with RD21A, RD21B and XCP2.

The protein resides in the cytoplasm. It is found in the cytosol. The protein localises to the nucleus. Involved in susceptibility to the bacterial plant pathogen Ralstonia solanacearum. Stabilizes the xylem cysteine protease XCP2 by blocking its autolysis. This chain is Pirin-like protein 2, found in Arabidopsis thaliana (Mouse-ear cress).